The chain runs to 273 residues: Coiled-coil domain-containing protein 122 (273 aa).

Residues 1–17 (MSDNKERKSQGFPKEDN) show a composition bias toward basic and acidic residues. A disordered region spans residues 1–39 (MSDNKERKSQGFPKEDNQDTSSLADAVEKVAKQQQSQAS). Coiled coils occupy residues 24 to 116 (ADAV…TAQE) and 179 to 269 (NRIT…RKCI).

This Homo sapiens (Human) protein is Coiled-coil domain-containing protein 122 (CCDC122).